Here is an 846-residue protein sequence, read N- to C-terminus: Enhancer of polycomb-like protein 1 (846 aa).

Disordered stretches follow at residues 169 to 204 (FNSKAEGSSGDVKSDKEQGRGMRVKGKDREKEKGDA), 391 to 466 (TSDE…APDA), 587 to 609 (EKKRPRSIDEVEEEMQEQSPKAM), 682 to 702 (AADAKPPPAPIFQKPPAPQPN), and 759 to 804 (QVQA…GVKQ). The segment covering 180 to 203 (VKSDKEQGRGMRVKGKDREKEKGD) has biased composition (basic and acidic residues). Polar residues predominate over residues 411-426 (PSLSGQTPLTSGQSSS). Basic and acidic residues predominate over residues 432–452 (TDKDREERAQRERYDAQRNAE). The stretch at 434–490 (KDREERAQRERYDAQRNAERSGILSGRSNAPDALKERLQALQQKTEEMLARKKEQDA) forms a coiled coil. The segment covering 686–702 (KPPPAPIFQKPPAPQPN) has biased composition (pro residues). Residues 759–773 (QVQAQGQGHPQAHLQ) are compositionally biased toward low complexity. A compositionally biased stretch (polar residues) spans 774–796 (THPQGVSQPNGVNSPMPNGQQML).

It belongs to the enhancer of polycomb family. As to quaternary structure, component of the NuA4 histone acetyltransferase complex.

It is found in the nucleus. Component of the NuA4 histone acetyltransferase complex which is involved in transcriptional activation of selected genes principally by acetylation of nucleosomal histone H4 and H2A. The NuA4 complex is also involved in DNA repair. Involved in gene silencing by neighboring heterochromatin, blockage of the silencing spreading along the chromosome, and required for cell cycle progression through G2/M. This is Enhancer of polycomb-like protein 1 (EPL1) from Cryptococcus neoformans var. neoformans serotype D (strain B-3501A) (Filobasidiella neoformans).